Reading from the N-terminus, the 154-residue chain is Endoribonuclease YbeY (154 aa).

Zn(2+) is bound by residues H114, H118, and H124.

It belongs to the endoribonuclease YbeY family. The cofactor is Zn(2+).

The protein localises to the cytoplasm. Its function is as follows. Single strand-specific metallo-endoribonuclease involved in late-stage 70S ribosome quality control and in maturation of the 3' terminus of the 16S rRNA. The polypeptide is Endoribonuclease YbeY (Haemophilus influenzae (strain ATCC 51907 / DSM 11121 / KW20 / Rd)).